A 218-amino-acid polypeptide reads, in one-letter code: Probable septum site-determining protein MinC (218 aa).

Belongs to the MinC family. As to quaternary structure, interacts with MinD and FtsZ.

In terms of biological role, cell division inhibitor that blocks the formation of polar Z ring septums. Rapidly oscillates between the poles of the cell to destabilize FtsZ filaments that have formed before they mature into polar Z rings. Prevents FtsZ polymerization. The polypeptide is Probable septum site-determining protein MinC (Kosmotoga olearia (strain ATCC BAA-1733 / DSM 21960 / TBF 19.5.1)).